Reading from the N-terminus, the 387-residue chain is Chlorophyll synthase, chloroplastic (387 aa).

The N-terminal 57 residues, 1–57, are a transit peptide targeting the chloroplast; sequence MTSILNTVSTIHSSRVTSVDRVGVLSLRNSDSVEFTRRRSGFSTLIYESPGRRFVVR. A disordered region spans residues 62 to 81; it reads DTDKVKSQTPDKAPAGGSSI. A run of 7 helical transmembrane segments spans residues 182 to 202, 210 to 230, 241 to 261, 266 to 286, 311 to 331, 336 to 356, and 364 to 384; these read VITQ…ILDV, TVFY…APPL, FALG…LFGT, VVVL…VNDF, WICV…LLAS, YALA…KYFL, and VKYQ…TALA.

The protein belongs to the UbiA prenyltransferase family. Chlorophyll synthase subfamily. As to expression, low level in flower buds, flowers, stems, leaves, greening cotyledons and immature siliques, but not in mature siliques or seeds.

The protein localises to the plastid. It localises to the chloroplast membrane. The catalysed reaction is phytyl diphosphate + chlorophyllide a + H(+) = chlorophyll a + diphosphate. It functions in the pathway porphyrin-containing compound metabolism; chlorophyll biosynthesis. Its function is as follows. Involved in one of the last steps of the biosynthesis of chlorophyll a. Catalyzes the esterification of chlorophillide a or b with a preference for geranylgeranyldiphosphate (GGPP) rather than for phytyldiphosphate (PhyPP). The polypeptide is Chlorophyll synthase, chloroplastic (CHLG) (Arabidopsis thaliana (Mouse-ear cress)).